Reading from the N-terminus, the 367-residue chain is tRNA (guanine(26)-N(2))-dimethyltransferase (367 aa).

One can recognise a Trm1 methyltransferase domain in the interval 1–365 (MRVSEGRVTV…ADVVEIREAT (365 aa)). Arg34, Arg64, Asp79, Asp105, and Ala106 together coordinate S-adenosyl-L-methionine. Residues Cys234, Cys237, Cys254, and Cys257 each coordinate Zn(2+).

This sequence belongs to the class I-like SAM-binding methyltransferase superfamily. Trm1 family.

The catalysed reaction is guanosine(26) in tRNA + 2 S-adenosyl-L-methionine = N(2)-dimethylguanosine(26) in tRNA + 2 S-adenosyl-L-homocysteine + 2 H(+). Functionally, dimethylates a single guanine residue at position 26 of a number of tRNAs using S-adenosyl-L-methionine as donor of the methyl groups. In Haloarcula marismortui (strain ATCC 43049 / DSM 3752 / JCM 8966 / VKM B-1809) (Halobacterium marismortui), this protein is tRNA (guanine(26)-N(2))-dimethyltransferase.